A 325-amino-acid chain; its full sequence is Biotin synthase (325 aa).

In terms of domain architecture, Radical SAM core spans V49–R279. Residues C66, C70, and C73 each contribute to the [4Fe-4S] cluster site. C144, C204, and R274 together coordinate [2Fe-2S] cluster.

The protein belongs to the radical SAM superfamily. Biotin synthase family. As to quaternary structure, homodimer. [4Fe-4S] cluster is required as a cofactor. It depends on [2Fe-2S] cluster as a cofactor.

The catalysed reaction is (4R,5S)-dethiobiotin + (sulfur carrier)-SH + 2 reduced [2Fe-2S]-[ferredoxin] + 2 S-adenosyl-L-methionine = (sulfur carrier)-H + biotin + 2 5'-deoxyadenosine + 2 L-methionine + 2 oxidized [2Fe-2S]-[ferredoxin]. The protein operates within cofactor biosynthesis; biotin biosynthesis; biotin from 7,8-diaminononanoate: step 2/2. Its function is as follows. Catalyzes the conversion of dethiobiotin (DTB) to biotin by the insertion of a sulfur atom into dethiobiotin via a radical-based mechanism. The sequence is that of Biotin synthase from Carboxydothermus hydrogenoformans (strain ATCC BAA-161 / DSM 6008 / Z-2901).